A 145-amino-acid chain; its full sequence is Putative pre-16S rRNA nuclease (145 aa).

Belongs to the YqgF nuclease family.

It localises to the cytoplasm. In terms of biological role, could be a nuclease involved in processing of the 5'-end of pre-16S rRNA. The sequence is that of Putative pre-16S rRNA nuclease from Limosilactobacillus fermentum (strain NBRC 3956 / LMG 18251) (Lactobacillus fermentum).